The primary structure comprises 114 residues: Hydrogenase maturation factor HypA (114 aa).

His2 serves as a coordination point for Ni(2+). Positions 73, 76, 90, and 93 each coordinate Zn(2+).

The protein belongs to the HypA/HybF family.

Its function is as follows. Involved in the maturation of [NiFe] hydrogenases. Required for nickel insertion into the metal center of the hydrogenase. This chain is Hydrogenase maturation factor HypA, found in Klebsiella pneumoniae subsp. pneumoniae (strain ATCC 700721 / MGH 78578).